Here is a 354-residue protein sequence, read N- to C-terminus: tRNA N6-adenosine threonylcarbamoyltransferase (354 aa).

Fe cation-binding residues include H115 and H119. Substrate is bound by residues 138-142 (LVSGG), D171, G184, and N276. Residue D304 coordinates Fe cation.

It belongs to the KAE1 / TsaD family. Fe(2+) serves as cofactor.

It localises to the cytoplasm. The enzyme catalyses L-threonylcarbamoyladenylate + adenosine(37) in tRNA = N(6)-L-threonylcarbamoyladenosine(37) in tRNA + AMP + H(+). Required for the formation of a threonylcarbamoyl group on adenosine at position 37 (t(6)A37) in tRNAs that read codons beginning with adenine. Is involved in the transfer of the threonylcarbamoyl moiety of threonylcarbamoyl-AMP (TC-AMP) to the N6 group of A37, together with TsaE and TsaB. TsaD likely plays a direct catalytic role in this reaction. This Xanthomonas oryzae pv. oryzae (strain MAFF 311018) protein is tRNA N6-adenosine threonylcarbamoyltransferase.